We begin with the raw amino-acid sequence, 203 residues long: Ribonuclease HII (203 aa).

Residues 14 to 203 (GVIAGVDEVG…ILNSTKRALL (190 aa)) enclose the RNase H type-2 domain. 3 residues coordinate a divalent metal cation: D20, E21, and D112.

Belongs to the RNase HII family. Mn(2+) is required as a cofactor. The cofactor is Mg(2+).

It localises to the cytoplasm. It carries out the reaction Endonucleolytic cleavage to 5'-phosphomonoester.. In terms of biological role, endonuclease that specifically degrades the RNA of RNA-DNA hybrids. The sequence is that of Ribonuclease HII from Wolbachia sp. subsp. Brugia malayi (strain TRS).